Reading from the N-terminus, the 892-residue chain is Alanine--tRNA ligase (892 aa).

Zn(2+) contacts are provided by H596, H600, C700, and H704.

The protein belongs to the class-II aminoacyl-tRNA synthetase family. Zn(2+) serves as cofactor.

The protein localises to the cytoplasm. It carries out the reaction tRNA(Ala) + L-alanine + ATP = L-alanyl-tRNA(Ala) + AMP + diphosphate. Catalyzes the attachment of alanine to tRNA(Ala) in a two-step reaction: alanine is first activated by ATP to form Ala-AMP and then transferred to the acceptor end of tRNA(Ala). Also edits incorrectly charged Ser-tRNA(Ala) and Gly-tRNA(Ala) via its editing domain. This is Alanine--tRNA ligase from Methanococcus maripaludis (strain C5 / ATCC BAA-1333).